Reading from the N-terminus, the 457-residue chain is Glycoprotein endo-alpha-1,2-mannosidase-like protein (457 aa).

Topologically, residues 1–8 are cytoplasmic; the sequence is MARRRRRA. A helical; Signal-anchor for type II membrane protein membrane pass occupies residues 9-29; that stretch reads CIALFLVLLFAFGTLMGLRTL. At 30 to 457 the chain is on the lumenal side; sequence KAPDGLPALG…FIKEKEQWLM (428 aa). The segment at 46 to 93 is disordered; that stretch reads PFERRPEGAPAPAARAPAAPAAPPPPPPPPRTADPGGSPGPAPAEAEP. Residues 53–64 show a composition bias toward low complexity; sequence GAPAPAARAPAA. A compositionally biased stretch (pro residues) spans 65–87; sequence PAAPPPPPPPPRTADPGGSPGPA.

It belongs to the glycosyl hydrolase 99 family.

It is found in the golgi apparatus membrane. This Homo sapiens (Human) protein is Glycoprotein endo-alpha-1,2-mannosidase-like protein (MANEAL).